The sequence spans 187 residues: Ribosome-recycling factor (187 aa).

Belongs to the RRF family.

It localises to the cytoplasm. In terms of biological role, responsible for the release of ribosomes from messenger RNA at the termination of protein biosynthesis. May increase the efficiency of translation by recycling ribosomes from one round of translation to another. The chain is Ribosome-recycling factor from Mycoplasmopsis pulmonis (strain UAB CTIP) (Mycoplasma pulmonis).